The chain runs to 647 residues: LIM domain kinase 1 (647 aa).

2 LIM zinc-binding domains span residues 25 to 75 and 84 to 137; these read CASC…CKKD and CHGC…CGQC. One can recognise a PDZ domain in the interval 165 to 258; it reads LVSIPASAHG…LLQLTLEHDP (94 aa). Phosphoserine is present on serine 210. A Phosphothreonine modification is found at threonine 229. A disordered region spans residues 256-316; that stretch reads HDPHDSLGHG…SLVSPASQRK (61 aa). Over residues 278–289 the composition is skewed to polar residues; the sequence is HTPSGQAGSSAR. Phosphoserine occurs at positions 298, 302, 307, and 310. Residue serine 323 is modified to Phosphoserine; by MAPKAPK2. Serine 337 is subject to Phosphoserine. One can recognise a Protein kinase domain in the interval 339 to 604; it reads LIHGEVLGKG…PSFVKLEQWL (266 aa). ATP-binding positions include 345–353 and lysine 368; that span reads LGKGCFGQA. Aspartate 460 is an active-site residue. Position 508 is a phosphothreonine; by ROCK1 and PAK1 (threonine 508).

This sequence belongs to the protein kinase superfamily. TKL Ser/Thr protein kinase family. In terms of assembly, interacts (via LIM domain) with the cytoplasmic domain of NRG1. Interacts with NISCH. Interacts with RLIM and RNF6. Self-associates to form homodimers. Interacts with HSP90AA1; this interaction promotes LIMK1 dimerization and subsequent transphosphorylation. Interacts with CDKN1C. Interacts with SSH1. Interacts with ROCK1. Interacts (via LIM zinc-binding domains) with FAM89B/LRAP25 (via LRR repeat). Forms a tripartite complex with CDC42BPA, CDC42BPB and FAM89B/LRAP25. Post-translationally, autophosphorylated. Phosphorylated on Thr-508 by ROCK1 and PAK1, resulting in activation. Phosphorylated by PAK4 which increases the ability of LIMK1 to phosphorylate cofilin. Phosphorylated at Ser-323 by MAPKAPK2 during activation of VEGFA-induced signaling, which results in activation of LIMK1 and promotion of actin reorganization, cell migration, and tubule formation of endothelial cells. Dephosphorylated and inactivated by SSH1. Phosphorylated by CDC42BP. In terms of processing, ubiquitinated. 'Lys-48'-linked polyubiquitination by RNF6 leads to proteasomal degradation through the 26S proteasome, modulating LIMK1 levels in the growth cone and its effect on axonal outgrowth. Also polyubiquitinated by RLIM.

It localises to the cytoplasm. It is found in the nucleus. The protein resides in the cytoskeleton. The protein localises to the cell projection. Its subcellular location is the lamellipodium. It carries out the reaction L-seryl-[protein] + ATP = O-phospho-L-seryl-[protein] + ADP + H(+). The enzyme catalyses L-threonyl-[protein] + ATP = O-phospho-L-threonyl-[protein] + ADP + H(+). Serine/threonine-protein kinase that plays an essential role in the regulation of actin filament dynamics. Acts downstream of several Rho family GTPase signal transduction pathways. Activated by upstream kinases including ROCK1, PAK1 and PAK4, which phosphorylate LIMK1 on a threonine residue located in its activation loop. LIMK1 subsequently phosphorylates and inactivates the actin binding/depolymerizing factors cofilin-1/CFL1, cofilin-2/CFL2 and destrin/DSTN, thereby preventing the cleavage of filamentous actin (F-actin), and stabilizing the actin cytoskeleton. In this way LIMK1 regulates several actin-dependent biological processes including cell motility, cell cycle progression, and differentiation. Phosphorylates TPPP on serine residues, thereby promoting microtubule disassembly. Stimulates axonal outgrowth and may be involved in brain development. The chain is LIM domain kinase 1 (Limk1) from Rattus norvegicus (Rat).